Here is a 472-residue protein sequence, read N- to C-terminus: MLTKKPVLSPDRCFSPEPVQRRLAHQFFDSISALPLVCPHGHVDPALLANPAARFGSPTELFIIPDHYILRMLYSRGVPLEALGIPTRDAPTETDHRKIWQLFAEHFYLFQGTPSGLWLKDELTNVFGVDEALNSRNAGRIYDYLEGLLALPKFSPRALFKRFNIEVLCTTDAASDNLENQRSLHEEGFTQIRPTFRPDAVVNLDAPGWRENLTKLESSIGREISSYATFVQALEERRAFFKKMGATATDQGAATPYTTSLSDQEAEAIFARALIGKLNPGDVEQFTGHIFMEMARMSVEDGLVMQMHCGVMRNHNPALFERFGSDKGADIPLNIEWTRNLHPLLSSYGNNQRFRLIIFGMDESTYSREMAPLAGHYPTILLGPPWWFHDSVNGMERYFNQVMETAGIYNTAGFNDDTRAFVSIPARHNVWRRVACNWLAGLVTRGLVDEEEGYDMARALAYDLAKSAYKLD.

The protein belongs to the metallo-dependent hydrolases superfamily. Uronate isomerase family.

The enzyme catalyses D-glucuronate = D-fructuronate. It carries out the reaction aldehydo-D-galacturonate = keto-D-tagaturonate. Its pathway is carbohydrate metabolism; pentose and glucuronate interconversion. In Nostoc punctiforme (strain ATCC 29133 / PCC 73102), this protein is Uronate isomerase.